A 190-amino-acid polypeptide reads, in one-letter code: Peptidyl-prolyl cis-trans isomerase A (190 aa).

Positions 1–24 are cleaved as a signal peptide; sequence MLKSTLAAVAAVFALSALSPAALA. One can recognise a PPIase cyclophilin-type domain in the interval 27-188; that stretch reads GDPHVLLTTS…KPVVILSAKV (162 aa).

This sequence belongs to the cyclophilin-type PPIase family.

The protein localises to the periplasm. It catalyses the reaction [protein]-peptidylproline (omega=180) = [protein]-peptidylproline (omega=0). In terms of biological role, PPIases accelerate the folding of proteins. It catalyzes the cis-trans isomerization of proline imidic peptide bonds in oligopeptides. In Salmonella typhimurium (strain LT2 / SGSC1412 / ATCC 700720), this protein is Peptidyl-prolyl cis-trans isomerase A (ppiA).